We begin with the raw amino-acid sequence, 345 residues long: 3-isopropylmalate dehydrogenase (345 aa).

An NAD(+)-binding site is contributed by 74-87; it reads GPKWDGLPRKISPE. Positions 94, 104, 132, and 217 each coordinate substrate. Residues Asp-217, Asp-241, and Asp-245 each contribute to the Mg(2+) site. Residue 274 to 286 coordinates NAD(+); the sequence is GSAPDIAGKGIAN.

It belongs to the isocitrate and isopropylmalate dehydrogenases family. LeuB type 1 subfamily. As to quaternary structure, homodimer. Requires Mg(2+) as cofactor. The cofactor is Mn(2+).

It is found in the cytoplasm. It carries out the reaction (2R,3S)-3-isopropylmalate + NAD(+) = 4-methyl-2-oxopentanoate + CO2 + NADH. The protein operates within amino-acid biosynthesis; L-leucine biosynthesis; L-leucine from 3-methyl-2-oxobutanoate: step 3/4. Catalyzes the oxidation of 3-carboxy-2-hydroxy-4-methylpentanoate (3-isopropylmalate) to 3-carboxy-4-methyl-2-oxopentanoate. The product decarboxylates to 4-methyl-2 oxopentanoate. The chain is 3-isopropylmalate dehydrogenase (leuB) from Thermus thermophilus.